Reading from the N-terminus, the 125-residue chain is UPF0738 protein GK0828 (125 aa).

It belongs to the UPF0738 family.

In Geobacillus kaustophilus (strain HTA426), this protein is UPF0738 protein GK0828.